The following is a 341-amino-acid chain: Protein pelota homolog (341 aa).

Belongs to the eukaryotic release factor 1 family. Pelota subfamily. As to quaternary structure, monomer. A divalent metal cation is required as a cofactor.

The protein resides in the cytoplasm. Its function is as follows. May function in recognizing stalled ribosomes, interact with stem-loop structures in stalled mRNA molecules, and effect endonucleolytic cleavage of the mRNA. May play a role in the release non-functional ribosomes and degradation of damaged mRNAs. Has endoribonuclease activity. The chain is Protein pelota homolog from Sulfurisphaera tokodaii (strain DSM 16993 / JCM 10545 / NBRC 100140 / 7) (Sulfolobus tokodaii).